The following is a 464-amino-acid chain: E3 ubiquitin-protein ligase parkin (464 aa).

Residues 1-76 enclose the Ubiquitin-like domain; it reads MIVFVRFNSS…VHIVQRPRRR (76 aa). Ser-65 is subject to Phosphoserine; by PINK1. Residues 70–96 are disordered; that stretch reads VQRPRRRSHETNASGGDEPQSTSEGSI. Residues 77 to 236 are necessary for PINK1-dependent localization to mitochondria; it reads SHETNASGGD…LITSNRRSIP (160 aa). Residue Thr-80 is modified to Phosphothreonine. Polar residues predominate over residues 80–96; it reads TNASGGDEPQSTSEGSI. The RING-type 0; atypical zinc finger occupies 140 to 224; that stretch reads PTYNSFFIYC…PTSDKDTSVA (85 aa). Phosphothreonine; by PINK1 is present on Thr-174. Residues 203 to 237 form an SYT11 binding 1 region; sequence TRAEFFFKCGAHPTSDKDTSVALNLITSNRRSIPC. Thr-216 is modified (phosphothreonine). A TRIAD supradomain region spans residues 233 to 464; that stretch reads RSIPCIACTD…ACMGDHWFDV (232 aa). Residues Cys-237, Cys-240, Cys-252, His-256, Cys-259, Cys-262, Cys-288, Cys-292, Cys-331, and Cys-336 each contribute to the Zn(2+) site. The RING-type 1 zinc finger occupies 237–292; the sequence is CIACTDVRSPVLVFQCNHRHVICLDCFHLYCVTRLNDRQFVHDAQLGYSLPCVAGC. An SYT11 binding 2 region spans residues 256-292; the sequence is HVICLDCFHLYCVTRLNDRQFVHDAQLGYSLPCVAGC. An IBR-type zinc finger spans residues 312–376; that stretch reads TRYQQYGAEE…CKEAYHEGDC (65 aa). A Glycyl lysine isopeptide (Lys-Gly) (interchain with G-Cter in ISG15) cross-link involves residue Lys-348. Positions 351, 359, 364, and 367 each coordinate Zn(2+). Lys-368 participates in a covalent cross-link: Glycyl lysine isopeptide (Lys-Gly) (interchain with G-Cter in ISG15). Zn(2+)-binding residues include His-372 and Cys-376. The segment at 377–409 is REP; it reads DSLLEPSGATSQAYRVDKRAAEQARWEEASKET. Positions 417 and 420 each coordinate Zn(2+). An RING-type 2; atypical zinc finger spans residues 417 to 448; the sequence is CPRCNVPIEKNGGCMHMKCPQPQCKLEWCWNC. Cys-430 is a catalytic residue. The Zn(2+) site is built by Cys-435, Cys-440, Cys-445, Cys-448, Cys-456, and His-460.

This sequence belongs to the RBR family. Parkin subfamily. Forms an E3 ubiquitin ligase complex with UBE2L3 or UBE2L6. Mediates 'Lys-63'-linked polyubiquitination by associating with UBE2V1. Part of a SCF-like complex, consisting of PRKN, CUL1 and FBXW7. Interacts with SNCAIP. Binds to the C2A and C2B domains of SYT11. Interacts and regulates the turnover of SEPTIN5. Part of a complex, including STUB1, HSP70 and GPR37. The amount of STUB1 in the complex increases during ER stress. STUB1 promotes the dissociation of HSP70 from PRKN and GPR37, thus facilitating PRKN-mediated GPR37 ubiquitination. HSP70 transiently associates with unfolded GPR37 and inhibits the E3 activity of PRKN, whereas, STUB1 enhances the E3 activity of PRKN through promotion of dissociation of HSP70 from PRKN-GPR37 complexes. Interacts with PSMD4 and PACRG. Interacts with LRRK2. Interacts with RANBP2. Interacts with SUMO1 but not SUMO2, which promotes nuclear localization and autoubiquitination. Interacts (via first RING-type domain) with AIMP2 (via N-terminus). Interacts with PSMA7 and RNF41. Interacts with PINK1. Forms a complex with PINK1 and PARK7. Interacts with CHPF, the interaction with isoform 2 may facilitate PRKN transport into the mitochondria. Interacts with MFN2 (phosphorylated), promotes PRKN localization in dysfunctional depolarized mitochondria. Interacts with FBXO7; this promotes translocation to dysfunctional depolarized mitochondria. Interacts with ZNF746. Interacts with heat shock protein 70 family members, including HSPA1L, HSPA1A and HSPA8; interaction HSPA1L promotes translocation to damaged mitochondria. Interacts with BAG4 and, to a lesser extent, BAG5; interaction with BAG4 inhibits translocation to damaged mitochondria. Forms a complex with PRKN and PARK7. Interacts with AMBRA1. Post-translationally, auto-ubiquitinates in an E2-dependent manner leading to its own degradation. Also polyubiquitinated by RNF41 for proteasomal degradation. In terms of processing, S-nitrosylated. Phosphorylated. Activation requires phosphorylation at Ser-65 by PINK1 and binding to PINK1 phosphorylated ubiquitin. Phosphorylation at Thr-174 by PINK1 and at Thr-216 is important for mitochondrial localization. Expressed in all subdivisions of the brain (at protein level). Highly expressed in brainstem, cranial nerve, pontine, cerebellar nuclei, indusium griseum, nuclei reticularis, strata oriens and laccunosum moleculare of the hippocampal CA2 region. Low levels were found in the telencephalon and diencephalon. Expressed in heart, liver, skeletal muscle, kidney and testis.

The protein resides in the cytoplasm. It is found in the cytosol. It localises to the nucleus. The protein localises to the endoplasmic reticulum. Its subcellular location is the mitochondrion. The protein resides in the mitochondrion outer membrane. It is found in the cell projection. It localises to the neuron projection. The protein localises to the postsynaptic density. Its subcellular location is the presynapse. The catalysed reaction is [E2 ubiquitin-conjugating enzyme]-S-ubiquitinyl-L-cysteine + [acceptor protein]-L-lysine = [E2 ubiquitin-conjugating enzyme]-L-cysteine + [acceptor protein]-N(6)-ubiquitinyl-L-lysine.. It participates in protein modification; protein ubiquitination. With respect to regulation, in the autoinhibited state the side chain of Phe-462 inserts into a hydrophobic groove in RING-0, occluding the ubiquitin acceptor site Cys-430, whereas the REP repressor element binds RING-1 and blocks its E2-binding site. Activation of PRKN requires 2 steps: (1) phosphorylation at Ser-65 by PINK1 and (2) binding to phosphorylated ubiquitin, leading to unlock repression of the catalytic Cys-430 by the RING-0 region via an allosteric mechanism and converting PRKN to its fully-active form. According to another report, phosphorylation at Ser-65 by PINK1 is not essential for activation and only binding to phosphorylated ubiquitin is essential to unlock repression. In addition, ISG15 conjugation positively regulates its ubiquitin E3 ligase activity by suppressing the intramolecular interaction that maintains its autoinhibited conformation. In terms of biological role, functions within a multiprotein E3 ubiquitin ligase complex, catalyzing the covalent attachment of ubiquitin moieties onto substrate proteins. Substrates include SYT11 and VDAC1. Other substrates are BCL2, CCNE1, GPR37, RHOT1/MIRO1, MFN1, MFN2, STUB1, SNCAIP, SEPTIN5, TOMM20, USP30, ZNF746, MIRO1 and AIMP2. Mediates monoubiquitination as well as 'Lys-6', 'Lys-11', 'Lys-48'-linked and 'Lys-63'-linked polyubiquitination of substrates depending on the context. Participates in the removal and/or detoxification of abnormally folded or damaged protein by mediating 'Lys-63'-linked polyubiquitination of misfolded proteins such as PARK7: 'Lys-63'-linked polyubiquitinated misfolded proteins are then recognized by HDAC6, leading to their recruitment to aggresomes, followed by degradation. Mediates 'Lys-63'-linked polyubiquitination of a 22 kDa O-linked glycosylated isoform of SNCAIP, possibly playing a role in Lewy-body formation. Mediates monoubiquitination of BCL2, thereby acting as a positive regulator of autophagy. Protects against mitochondrial dysfunction during cellular stress, by acting downstream of PINK1 to coordinate mitochondrial quality control mechanisms that remove and replace dysfunctional mitochondrial components. Depending on the severity of mitochondrial damage and/or dysfunction, activity ranges from preventing apoptosis and stimulating mitochondrial biogenesis to regulating mitochondrial dynamics and eliminating severely damaged mitochondria via mitophagy. Activation and recruitment onto the outer membrane of damaged/dysfunctional mitochondria (OMM) requires PINK1-mediated phosphorylation of both PRKN and ubiquitin. After mitochondrial damage, functions with PINK1 to mediate the decision between mitophagy or preventing apoptosis by inducing either the poly- or monoubiquitination of VDAC1, respectively; polyubiquitination of VDAC1 promotes mitophagy, while monoubiquitination of VDAC1 decreases mitochondrial calcium influx which ultimately inhibits apoptosis. When cellular stress results in irreversible mitochondrial damage, promotes the autophagic degradation of dysfunctional depolarized mitochondria (mitophagy) by promoting the ubiquitination of mitochondrial proteins such as TOMM20, RHOT1/MIRO1, MFN1 and USP30. Preferentially assembles 'Lys-6'-, 'Lys-11'- and 'Lys-63'-linked polyubiquitin chains, leading to mitophagy. The PINK1-PRKN pathway also promotes fission of damaged mitochondria by PINK1-mediated phosphorylation which promotes the PRKN-dependent degradation of mitochondrial proteins involved in fission such as MFN2. This prevents the refusion of unhealthy mitochondria with the mitochondrial network or initiates mitochondrial fragmentation facilitating their later engulfment by autophagosomes. Regulates motility of damaged mitochondria via the ubiquitination and subsequent degradation of MIRO1 and MIRO2; in motor neurons, this likely inhibits mitochondrial intracellular anterograde transport along the axons which probably increases the chance of the mitochondria undergoing mitophagy in the soma. Involved in mitochondrial biogenesis via the 'Lys-48'-linked polyubiquitination of transcriptional repressor ZNF746/PARIS which leads to its subsequent proteasomal degradation and allows activation of the transcription factor PPARGC1A. Limits the production of reactive oxygen species (ROS). Regulates cyclin-E during neuronal apoptosis. In collaboration with CHPF isoform 2, may enhance cell viability and protect cells from oxidative stress. Independently of its ubiquitin ligase activity, protects from apoptosis by the transcriptional repression of p53/TP53. May protect neurons against alpha synuclein toxicity, proteasomal dysfunction, GPR37 accumulation, and kainate-induced excitotoxicity. May play a role in controlling neurotransmitter trafficking at the presynaptic terminal and in calcium-dependent exocytosis. May represent a tumor suppressor gene. The sequence is that of E3 ubiquitin-protein ligase parkin from Mus musculus (Mouse).